A 230-amino-acid chain; its full sequence is Thiamine-triphosphatase (230 aa).

Residue Ala2 is modified to N-acetylalanine. The CYTH domain occupies Leu5–Phe201. The Mg(2+) site is built by Glu7 and Glu9. Substrate is bound by residues Lys11, Arg55, Arg57, Lys65, and Arg125. 3 residues coordinate Mg(2+): Asp145, Glu157, and Glu159. Residue Glu157 participates in substrate binding. Substrate is bound at residue Lys193.

This sequence belongs to the ThTPase family. As to quaternary structure, monomer. The cofactor is Mg(2+). As to expression, widely expressed but at a low level.

Its subcellular location is the cytoplasm. The enzyme catalyses thiamine triphosphate + H2O = thiamine diphosphate + phosphate + H(+). Functionally, hydrolase highly specific for thiamine triphosphate (ThTP). This chain is Thiamine-triphosphatase (THTPA), found in Homo sapiens (Human).